The chain runs to 325 residues: Flavin-dependent thymidylate synthase (325 aa).

One can recognise a ThyX domain in the interval 12 to 267 (ISVRLLEYTG…PRLFRWAGPS (256 aa)). FAD-binding positions include Ser-65, 89–91 (RHR), and Gln-97. DUMP contacts are provided by residues 86–89 (QLVR) and 97–101 (QLSHR). The ThyX motif motif lies at 89 to 99 (RHRVASYTQLS). Positions 110–159 (AALKACESIGLDCPSKPAETEGGRKAAYRLYSQALERAARDFGASERFAI) are insert. Arg-205 contacts dUMP. Position 221–223 (221–223 (NAR)) interacts with FAD. DUMP is bound at residue Arg-233. Residue Arg-233 is the Involved in ionization of N3 of dUMP, leading to its activation of the active site.

It belongs to the thymidylate synthase ThyX family. Homotetramer. FAD serves as cofactor.

The catalysed reaction is dUMP + (6R)-5,10-methylene-5,6,7,8-tetrahydrofolate + NADPH + H(+) = dTMP + (6S)-5,6,7,8-tetrahydrofolate + NADP(+). Its pathway is pyrimidine metabolism; dTTP biosynthesis. Catalyzes the reductive methylation of 2'-deoxyuridine-5'-monophosphate (dUMP) to 2'-deoxythymidine-5'-monophosphate (dTMP) while utilizing 5,10-methylenetetrahydrofolate (mTHF) as the methyl donor, and NADPH and FADH(2) as the reductant. The sequence is that of Flavin-dependent thymidylate synthase from Aeropyrum pernix (strain ATCC 700893 / DSM 11879 / JCM 9820 / NBRC 100138 / K1).